The chain runs to 760 residues: Forkhead box protein M1 (760 aa).

Disordered stretches follow at residues 1–54 and 95–167; these read MRTS…AESS and GKES…SYAG. 2 stretches are compositionally biased toward low complexity: residues 43–54 and 110–124; these read PAQASQEVAESS and SSGG…PQAH. Residues 125–134 show a composition bias toward basic and acidic residues; sequence SSRDSKRAEV. Low complexity predominate over residues 140-149; the sequence is GPKPAAKGVP. Glycyl lysine isopeptide (Lys-Gly) (interchain with G-Cter in SUMO2) cross-links involve residues Lys199 and Lys323. Positions 233 to 325 form a DNA-binding region, fork-head; sequence ERPPYSYMAM…LTLDQVFKPL (93 aa). The disordered stretch occupies residues 323–348; it reads KPLEPGSPQSPEHLESQQKRPNPELH. The residue at position 329 (Ser329) is a Phosphoserine. Residues 334–348 show a composition bias toward basic and acidic residues; the sequence is EHLESQQKRPNPELH. A Glycyl lysine isopeptide (Lys-Gly) (interchain with G-Cter in SUMO2) cross-link involves residue Lys354. Ser374 carries the phosphoserine; by CHEK2 modification. Glycyl lysine isopeptide (Lys-Gly) (interchain with G-Cter in SUMO2) cross-links involve residues Lys420 and Lys438. Disordered stretches follow at residues 500-560, 577-635, and 660-709; these read SWED…PDLF, ESSE…LDFS, and PLKS…IPSL. Ser521 carries the phosphoserine modification. A compositionally biased stretch (basic and acidic residues) spans 531 to 542; that stretch reads VTKRREKREVSR. Polar residues predominate over residues 604-613; it reads PVSSTPSKSV. Thr608 carries the phosphothreonine; by CDK1 modification. Thr624 bears the Phosphothreonine mark. Residues Ser727 and Ser736 each carry the phosphoserine; by PLK1 modification.

In terms of processing, phosphorylated in M (mitotic) phase. Phosphorylation by the checkpoint kinase CHEK2 in response to DNA damage increases the FOXM1 protein stability probably stimulating the transcription of genes involved in DNA repair. Phosphorylated by CDK1 in late S and G2 phases, creating docking sites for the POLO box domains of PLK1. Subsequently, PLK1 binds and phosphorylates FOXM1, leading to activation of transcriptional activity and subsequent enhanced expression of key mitotic regulators. Phosphorylated by GSK3B leading to ubiquitination and proteasomal degradation. Expressed in fetal heart, brain, liver, lung, kidney and limb, but only in adult thymus. Appears to be expressed only in adult organs containing proliferating/cycling cells or in response to growth factors.

It localises to the nucleus. Its function is as follows. Transcription factor regulating the expression of cell cycle genes essential for DNA replication and mitosis. Plays a role in the control of cell proliferation. Also plays a role in DNA break repair, participating in the DNA damage checkpoint response. Promotes transcription of PHB2. This is Forkhead box protein M1 (Foxm1) from Mus musculus (Mouse).